The following is a 485-amino-acid chain: Glutamyl-tRNA(Gln) amidotransferase subunit A (485 aa).

Residues Lys-79 and Ser-154 each act as charge relay system in the active site. The active-site Acyl-ester intermediate is Ser-178.

It belongs to the amidase family. GatA subfamily. As to quaternary structure, heterotrimer of A, B and C subunits.

It catalyses the reaction L-glutamyl-tRNA(Gln) + L-glutamine + ATP + H2O = L-glutaminyl-tRNA(Gln) + L-glutamate + ADP + phosphate + H(+). Functionally, allows the formation of correctly charged Gln-tRNA(Gln) through the transamidation of misacylated Glu-tRNA(Gln) in organisms which lack glutaminyl-tRNA synthetase. The reaction takes place in the presence of glutamine and ATP through an activated gamma-phospho-Glu-tRNA(Gln). This Persephonella marina (strain DSM 14350 / EX-H1) protein is Glutamyl-tRNA(Gln) amidotransferase subunit A.